Here is a 747-residue protein sequence, read N- to C-terminus: Potassium transporter 20 (747 aa).

Residues 1–47 (MSVQEDDDAAGPEVDRLRRHDSFYGDAEKVSNDKSHGTGENWARTLQ) lie on the Cytoplasmic side of the membrane. The chain crosses the membrane as a helical span at residues 48–68 (LAFQSIGVVYGDVGTSPLYVY). Topologically, residues 69–84 (SSTFPDGVKHPDDLVG) are extracellular. A helical transmembrane segment spans residues 85–105 (VLSLMLYTLILIPMVKYVFIV). The Cytoplasmic portion of the chain corresponds to 106 to 171 (LYANDNGDGG…QKLESSNAAK (66 aa)). Residues 172 to 192 (IALFTITILGTSMVMGDGTLT) form a helical membrane-spanning segment. Residues 193 to 209 (PAISVLSAVSGIREKAP) are Extracellular-facing. Residues 210–230 (SLTQLQVVWISVPILIVLFSV) form a helical membrane-spanning segment. Residues 231 to 237 (QRFGTDK) are Cytoplasmic-facing. A helical membrane pass occupies residues 238 to 258 (VGYSFAPVISVWFVLIAGIGA). Topologically, residues 259 to 288 (YNLAVHEITILRAFNPMYIIDYFRRNGKEA) are extracellular. The helical transmembrane segment at 289-309 (WVSLGGAVLCITGTEAMFADL) threads the bilayer. Topologically, residues 310-318 (GHFNIRAIQ) are cytoplasmic. The helical transmembrane segment at 319 to 339 (LSFTCVLFPSVALCYMGQAAY) threads the bilayer. Residues 340 to 353 (LRKFPEDVGDTFYK) are Extracellular-facing. The helical transmembrane segment at 354–374 (SLPAPLFWPVFVVAIMAAIIA) threads the bilayer. Topologically, residues 375–410 (SQAMLSGAFAILSKALPLGCFPRVEVVHTSNKYEGQ) are cytoplasmic. The helical transmembrane segment at 411–431 (VYIPEVNFLIGVASVAITVAF) threads the bilayer. The Extracellular segment spans residues 432-442 (QTTANIGNAYG). A helical transmembrane segment spans residues 443–463 (ICVVMVFSITTHLMTVVMLLI). Topologically, residues 464 to 469 (WKVRLP) are cytoplasmic. A helical transmembrane segment spans residues 470 to 490 (FIAAFYVVFTFTEFLYLSSIL). Topologically, residues 491-496 (SKFAEG) are extracellular. A helical transmembrane segment spans residues 497-517 (GYLPFCFSLVLMALMATWHYV). Residues 518–747 (HVKRYWYELD…LLKVGITYEI (230 aa)) are Cytoplasmic-facing.

The protein belongs to the HAK/KUP transporter (TC 2.A.72.3) family.

The protein localises to the membrane. In terms of biological role, high-affinity potassium transporter. The chain is Potassium transporter 20 (HAK20) from Oryza sativa subsp. japonica (Rice).